The following is a 356-amino-acid chain: MGQTLSEPVTKKESASCANENYLVGSSCMQGWRVDMEDAHTHLLSLPDDPKCAFFAVYDGHGGSKVSQYSGINLHKKVVAQKEFSEGNMKEAIEKGFLELDQQMRVDEETKDDVSGTTAVVVLIKEGDVYCGNAGDSRAVSSVVGEARPLSFDHKPSHETEARRIIAAGGWVEFNRVNGNLALSRALGDFAFKNCDTKPAEEQIVTAFPDVITDKLTPDHEFIVLACDGIWDVMTNQEVVDFVREKLAEKRDPQSICEELLTRCLAPDCQMGGLGCDNMTVVLVGLLHGQSPDTLFTKCARPAVFTGVNNEDGDQNQIQQDISRVINNFDGEQRVNAANQEEEEDDNEPAPANFQV.

The PPM-type phosphatase domain occupies leucine 23 to leucine 286. Mn(2+)-binding residues include aspartate 59, glycine 60, aspartate 228, and aspartate 277. Positions asparagine 336–valine 356 are disordered.

Belongs to the PP2C family. It depends on Mg(2+) as a cofactor. Requires Mn(2+) as cofactor.

It carries out the reaction O-phospho-L-seryl-[protein] + H2O = L-seryl-[protein] + phosphate. The catalysed reaction is O-phospho-L-threonyl-[protein] + H2O = L-threonyl-[protein] + phosphate. This chain is Probable protein phosphatase 2C T23F11.1 (ppm-2), found in Caenorhabditis elegans.